Reading from the N-terminus, the 444-residue chain is UDP-N-acetylmuramate--L-alanine ligase (444 aa).

Residue 110 to 116 (GAHGKTS) participates in ATP binding.

It belongs to the MurCDEF family.

It is found in the cytoplasm. The catalysed reaction is UDP-N-acetyl-alpha-D-muramate + L-alanine + ATP = UDP-N-acetyl-alpha-D-muramoyl-L-alanine + ADP + phosphate + H(+). It participates in cell wall biogenesis; peptidoglycan biosynthesis. Cell wall formation. The chain is UDP-N-acetylmuramate--L-alanine ligase from Streptococcus pneumoniae (strain P1031).